Here is a 312-residue protein sequence, read N- to C-terminus: Methionyl-tRNA formyltransferase (312 aa).

A (6S)-5,6,7,8-tetrahydrofolate-binding site is contributed by 112–115 (SLLP).

This sequence belongs to the Fmt family.

The enzyme catalyses L-methionyl-tRNA(fMet) + (6R)-10-formyltetrahydrofolate = N-formyl-L-methionyl-tRNA(fMet) + (6S)-5,6,7,8-tetrahydrofolate + H(+). Its function is as follows. Attaches a formyl group to the free amino group of methionyl-tRNA(fMet). The formyl group appears to play a dual role in the initiator identity of N-formylmethionyl-tRNA by promoting its recognition by IF2 and preventing the misappropriation of this tRNA by the elongation apparatus. In Dehalococcoides mccartyi (strain CBDB1), this protein is Methionyl-tRNA formyltransferase.